We begin with the raw amino-acid sequence, 910 residues long: Inactive disease susceptibility protein LOV1 (910 aa).

Residues alanine 22–asparagine 60 are a coiled coil. In terms of domain architecture, NB-ARC spans glutamate 169 to aspartate 461. 3 LRR repeats span residues leucine 584 to leucine 609, isoleucine 610 to leucine 632, and leucine 634 to methionine 655.

The protein belongs to the disease resistance NB-LRR family. RPP8/HRT subfamily.

The sequence is that of Inactive disease susceptibility protein LOV1 (LOV1) from Arabidopsis thaliana (Mouse-ear cress).